A 107-amino-acid chain; its full sequence is Phosphoribosyl-ATP pyrophosphatase (107 aa).

Belongs to the PRA-PH family.

It is found in the cytoplasm. It catalyses the reaction 1-(5-phospho-beta-D-ribosyl)-ATP + H2O = 1-(5-phospho-beta-D-ribosyl)-5'-AMP + diphosphate + H(+). It functions in the pathway amino-acid biosynthesis; L-histidine biosynthesis; L-histidine from 5-phospho-alpha-D-ribose 1-diphosphate: step 2/9. This chain is Phosphoribosyl-ATP pyrophosphatase, found in Rhizobium johnstonii (strain DSM 114642 / LMG 32736 / 3841) (Rhizobium leguminosarum bv. viciae).